The following is a 47-amino-acid chain: Lysis protein for colicin E7 (47 aa).

Positions 1 to 19 (MKKITGIILLLLAAIILAA) are cleaved as a signal peptide. Residue Cys-20 is the site of N-palmitoyl cysteine attachment. Cys-20 carries the S-diacylglycerol cysteine lipid modification.

It localises to the cell outer membrane. Lysis proteins are required for both colicin release and partial cell lysis. The sequence is that of Lysis protein for colicin E7 (lys) from Escherichia coli.